A 271-amino-acid chain; its full sequence is Putative hydro-lyase Mrad2831_3350 (271 aa).

This sequence belongs to the D-glutamate cyclase family.

The polypeptide is Putative hydro-lyase Mrad2831_3350 (Methylobacterium radiotolerans (strain ATCC 27329 / DSM 1819 / JCM 2831 / NBRC 15690 / NCIMB 10815 / 0-1)).